Consider the following 921-residue polypeptide: Protein translocase subunit SecA (921 aa).

ATP contacts are provided by residues glutamine 86, 104–108, and aspartate 512; that span reads GEGKT. Zn(2+)-binding residues include cysteine 905, cysteine 907, cysteine 916, and histidine 917.

Belongs to the SecA family. In terms of assembly, monomer and homodimer. Part of the essential Sec protein translocation apparatus which comprises SecA, SecYEG and auxiliary proteins SecDF-YajC and YidC. The cofactor is Zn(2+).

The protein resides in the cell inner membrane. It is found in the cytoplasm. The enzyme catalyses ATP + H2O + cellular proteinSide 1 = ADP + phosphate + cellular proteinSide 2.. Functionally, part of the Sec protein translocase complex. Interacts with the SecYEG preprotein conducting channel. Has a central role in coupling the hydrolysis of ATP to the transfer of proteins into and across the cell membrane, serving both as a receptor for the preprotein-SecB complex and as an ATP-driven molecular motor driving the stepwise translocation of polypeptide chains across the membrane. This chain is Protein translocase subunit SecA, found in Caulobacter sp. (strain K31).